Here is a 199-residue protein sequence, read N- to C-terminus: N-(5'-phosphoribosyl)anthranilate isomerase (199 aa).

This sequence belongs to the TrpF family.

The catalysed reaction is N-(5-phospho-beta-D-ribosyl)anthranilate = 1-(2-carboxyphenylamino)-1-deoxy-D-ribulose 5-phosphate. It participates in amino-acid biosynthesis; L-tryptophan biosynthesis; L-tryptophan from chorismate: step 3/5. This chain is N-(5'-phosphoribosyl)anthranilate isomerase, found in Streptococcus pneumoniae (strain ATCC 700669 / Spain 23F-1).